A 199-amino-acid polypeptide reads, in one-letter code: NADH-quinone oxidoreductase subunit C (199 aa).

This sequence belongs to the complex I 30 kDa subunit family. NDH-1 is composed of 14 different subunits. Subunits NuoB, C, D, E, F, and G constitute the peripheral sector of the complex.

The protein localises to the cell inner membrane. The enzyme catalyses a quinone + NADH + 5 H(+)(in) = a quinol + NAD(+) + 4 H(+)(out). NDH-1 shuttles electrons from NADH, via FMN and iron-sulfur (Fe-S) centers, to quinones in the respiratory chain. The immediate electron acceptor for the enzyme in this species is believed to be ubiquinone. Couples the redox reaction to proton translocation (for every two electrons transferred, four hydrogen ions are translocated across the cytoplasmic membrane), and thus conserves the redox energy in a proton gradient. This chain is NADH-quinone oxidoreductase subunit C, found in Roseobacter denitrificans (strain ATCC 33942 / OCh 114) (Erythrobacter sp. (strain OCh 114)).